Reading from the N-terminus, the 346-residue chain is 2,5-dichlorohydroquinone reductive dechlorinase (346 aa).

The 112-residue stretch at Pro43–Thr154 folds into the GST N-terminal domain. A GST C-terminal domain is found at Asp189–Pro335.

This sequence belongs to the GST superfamily.

It catalyses the reaction 2,5-dichlorohydroquinone + 2 glutathione = chlorohydroquinone + glutathione disulfide + chloride + H(+). The catalysed reaction is chlorohydroquinone + 2 glutathione = hydroquinone + glutathione disulfide + chloride + H(+). It participates in xenobiotic degradation; gamma-hexachlorocyclohexane degradation. In terms of biological role, catalyzes the degradation of 2,5-dichlorohydroquinone (2,5-DCHQ) into hydroquinone (HQ) via chlorohydroquinone (CHQ). Is involved in the degradation pathway that allows S.japonicum UT26 to grow on gamma-hexachlorocyclohexane (gamma-HCH or lindane) as the sole source of carbon and energy. However, the conversion of CHQ to HQ by LinD seems not to be essential for this degradation pathway, because the conversion rate of CHQ to HQ is much lower than that of 2,5-DCHQ to CHQ. CHQ is more efficiently degraded by LinE in strain UT26. This is 2,5-dichlorohydroquinone reductive dechlorinase from Sphingobium indicum (strain DSM 16413 / CCM 7287 / MTCC 6362 / UT26 / NBRC 101211 / UT26S) (Sphingobium japonicum).